Consider the following 632-residue polypeptide: Cytosolic Fe-S cluster assembly factor NAR1 (632 aa).

C20 contacts [4Fe-4S] cluster. A disordered region spans residues 27–53; the sequence is LPAKPEDSSNPYEVTTEDKAAASQPPP. [4Fe-4S] cluster-binding residues include C62, C65, and C68. Disordered stretches follow at residues 99–119 and 210–231; these read WQTQ…NGHS and LSPE…DTTP. The span at 101–119 shows a compositional bias: low complexity; it reads TQNGTNGTNGTNGTTNGHS. Residues 211–221 show a composition bias toward polar residues; that stretch reads SPETSNPSTKP. [4Fe-4S] cluster contacts are provided by C240, C295, C486, and C490. Positions 542–573 are disordered; it reads GSDSEEEKVDQDGDQNMQDATTNGHTSEPDIV. Over residues 544 to 554 the composition is skewed to acidic residues; the sequence is DSEEEKVDQDG. Polar residues predominate over residues 555–567; that stretch reads DQNMQDATTNGHT.

It belongs to the NARF family.

In terms of biological role, component of the cytosolic Fe/S protein assembly machinery. Required for maturation of extramitochondrial Fe/S proteins. May play a role in the transfer of pre-assembled Fe/S clusters to target apoproteins. This is Cytosolic Fe-S cluster assembly factor NAR1 (NAR1) from Phaeosphaeria nodorum (strain SN15 / ATCC MYA-4574 / FGSC 10173) (Glume blotch fungus).